The sequence spans 269 residues: Iron(3+)-hydroxamate import ATP-binding protein FhuC (269 aa).

In terms of domain architecture, ABC transporter spans 4-240; the sequence is LSTEQLGIGY…DILKQVFQID (237 aa). Residues 36–43 and 160–171 contribute to the ATP site; these read GPNGCGKS and LLLLDEPTTYLD.

Belongs to the ABC transporter superfamily. Iron (Fe3+)-hydroxamate importer (TC 3.A.1.14.7) family. The complex is composed of an ATP-binding protein (FhuC), two transmembrane proteins (FhuB and FhuG) and a solute-binding protein (FhuD or YxeB).

It localises to the cell membrane. The catalysed reaction is ATP + H2O + Fe(3+)-hydroxamate complex-[hydroxamate-binding protein]Side 1 = ADP + phosphate + Fe(3+)-hydroxamate complexSide 2 + [hydroxamate-binding protein]Side 1.. Part of the ABC transporter complex FhuBGCD involved in iron(3+)-hydroxamate import. Responsible for energy coupling to the transport system. The sequence is that of Iron(3+)-hydroxamate import ATP-binding protein FhuC (fhuC) from Bacillus subtilis (strain 168).